A 269-amino-acid chain; its full sequence is Extracellular metalloprotease UREG_07765 (269 aa).

Residues 1–18 form the signal peptide; it reads MRLSVSLLALAFGSLVAA. N-linked (GlcNAc...) asparagine glycosylation is present at N179. H191 is a Zn(2+) binding site. E192 is an active-site residue. H195 is a binding site for Zn(2+). The interval 207–227 is disordered; the sequence is VSDTPPQRSSTQGCPSSRDSC. The segment covering 210-225 has biased composition (polar residues); it reads TPPQRSSTQGCPSSRD. C220 and C246 are oxidised to a cystine.

It belongs to the peptidase M43B family.

Its subcellular location is the secreted. Functionally, secreted metalloproteinase that allows assimilation of proteinaceous substrates. The polypeptide is Extracellular metalloprotease UREG_07765 (Uncinocarpus reesii (strain UAMH 1704)).